The chain runs to 121 residues: Ribosome-binding factor A (121 aa).

Belongs to the RbfA family. In terms of assembly, monomer. Binds 30S ribosomal subunits, but not 50S ribosomal subunits or 70S ribosomes.

It localises to the cytoplasm. Its function is as follows. One of several proteins that assist in the late maturation steps of the functional core of the 30S ribosomal subunit. Associates with free 30S ribosomal subunits (but not with 30S subunits that are part of 70S ribosomes or polysomes). Required for efficient processing of 16S rRNA. May interact with the 5'-terminal helix region of 16S rRNA. The protein is Ribosome-binding factor A of Hydrogenovibrio crunogenus (strain DSM 25203 / XCL-2) (Thiomicrospira crunogena).